A 333-amino-acid chain; its full sequence is COMPASS-like H3K4 histone methylase component WDR5B (333 aa).

WD repeat units lie at residues 1–40 (MPSG…KTLE), 41–80 (GHTA…LIHR), 83–122 (GHSS…ECLK), 126–167 (GHTN…RMIK), 169–207 (HSMP…CLKT), 211–252 (DKSP…KVYT), 253–295 (GHTN…ILQR), and 298–333 (GHTD…KQDA).

In terms of assembly, unlike WDR5A, does not interact with RBL or TRO.

This chain is COMPASS-like H3K4 histone methylase component WDR5B, found in Arabidopsis thaliana (Mouse-ear cress).